Reading from the N-terminus, the 754-residue chain is 5-methyltetrahydropteroyltriglutamate--homocysteine methyltransferase (754 aa).

Residues 16-19 (RELK) and lysine 114 each bind 5-methyltetrahydropteroyltri-L-glutamate. Residues 430–432 (IGS) and glutamate 483 contribute to the L-homocysteine site. Residues 430-432 (IGS) and glutamate 483 each bind L-methionine. 5-methyltetrahydropteroyltri-L-glutamate contacts are provided by residues 514–515 (RC) and tryptophan 560. Aspartate 598 contacts L-homocysteine. Aspartate 598 is a binding site for L-methionine. Residue glutamate 604 coordinates 5-methyltetrahydropteroyltri-L-glutamate. Zn(2+) is bound by residues histidine 640, cysteine 642, and glutamate 664. Histidine 693 acts as the Proton donor in catalysis. Residue cysteine 725 coordinates Zn(2+).

It belongs to the vitamin-B12 independent methionine synthase family. It depends on Zn(2+) as a cofactor.

The catalysed reaction is 5-methyltetrahydropteroyltri-L-glutamate + L-homocysteine = tetrahydropteroyltri-L-glutamate + L-methionine. The protein operates within amino-acid biosynthesis; L-methionine biosynthesis via de novo pathway; L-methionine from L-homocysteine (MetE route): step 1/1. Its function is as follows. Catalyzes the transfer of a methyl group from 5-methyltetrahydrofolate to homocysteine resulting in methionine formation. This chain is 5-methyltetrahydropteroyltriglutamate--homocysteine methyltransferase, found in Aeromonas salmonicida (strain A449).